Reading from the N-terminus, the 454-residue chain is MKSRFAPSPTGCLHIGGARTALFAWVWAKKQHGKFVLRIEDTDLERSNQASVDAILQGMNWLGLDYDEGPFYQTDRFNRYKQVVRQLLDEKKAYYCECSKERLQILHEDLIKQGKKVRYDGCCRDKNLNDGVVRFNNPEDGLVIFNDVIKGQISINNKELDDLIIVRSDGTPTYNLTVVVDDHDMQIDCVIRGDDHINNTPKQINLYQALGWHLPEFAHLPMILSSDGARLSKRHDAVSIMTYRDAGFLPEALLNYLARLGWSYGDQEIFSMDEIVKLFELKSINKAPASFNQDKLLWLNQKIIKNSSVENLLNNLTWHLQNQAITITNAPNIEAVVQYLQNRCKTLVDMAGEVKMFYQDFDTFDEKLAKRYLKDKTPLKHLFAKLEALRIWKANNIKQAVKEVCFELNISFGKVGQPFRLALSGNGNAGSIDIVAELVGKNKALSRLKMAIDS.

The 'HIGH' region motif lies at 7-17; it reads PSPTGCLHIGG. Zn(2+) contacts are provided by cysteine 96, cysteine 98, cysteine 123, and aspartate 125. The 'KMSKS' region signature appears at 230 to 234; sequence RLSKR. Lysine 233 is an ATP binding site.

This sequence belongs to the class-I aminoacyl-tRNA synthetase family. Glutamate--tRNA ligase type 1 subfamily. In terms of assembly, monomer. Zn(2+) serves as cofactor.

It localises to the cytoplasm. The enzyme catalyses tRNA(Glu) + L-glutamate + ATP = L-glutamyl-tRNA(Glu) + AMP + diphosphate. In terms of biological role, catalyzes the attachment of glutamate to tRNA(Glu) in a two-step reaction: glutamate is first activated by ATP to form Glu-AMP and then transferred to the acceptor end of tRNA(Glu). The polypeptide is Glutamate--tRNA ligase (Ruthia magnifica subsp. Calyptogena magnifica).